The sequence spans 280 residues: 4-diphosphocytidyl-2-C-methyl-D-erythritol kinase (280 aa).

Residue K8 is part of the active site. 91–101 contacts ATP; the sequence is PVSAGLAGGSS. D133 is a catalytic residue.

The protein belongs to the GHMP kinase family. IspE subfamily.

It catalyses the reaction 4-CDP-2-C-methyl-D-erythritol + ATP = 4-CDP-2-C-methyl-D-erythritol 2-phosphate + ADP + H(+). It functions in the pathway isoprenoid biosynthesis; isopentenyl diphosphate biosynthesis via DXP pathway; isopentenyl diphosphate from 1-deoxy-D-xylulose 5-phosphate: step 3/6. Its function is as follows. Catalyzes the phosphorylation of the position 2 hydroxy group of 4-diphosphocytidyl-2C-methyl-D-erythritol. The sequence is that of 4-diphosphocytidyl-2-C-methyl-D-erythritol kinase from Clostridium novyi (strain NT).